Here is a 316-residue protein sequence, read N- to C-terminus: N-acetylmuramic acid 6-phosphate etherase (316 aa).

The segment at 1-23 is disordered; that stretch reads MAGFDPTLQPSDDRGHLLTEQSN. The SIS domain occupies 66 to 229; that stretch reads ISKRLSSGGR…STTVMVRLGK (164 aa). E94 (proton donor) is an active-site residue. Residue E125 is part of the active site.

Belongs to the GCKR-like family. MurNAc-6-P etherase subfamily. Homodimer.

It catalyses the reaction N-acetyl-D-muramate 6-phosphate + H2O = N-acetyl-D-glucosamine 6-phosphate + (R)-lactate. Its pathway is amino-sugar metabolism; N-acetylmuramate degradation. Its function is as follows. Specifically catalyzes the cleavage of the D-lactyl ether substituent of MurNAc 6-phosphate, producing GlcNAc 6-phosphate and D-lactate. This chain is N-acetylmuramic acid 6-phosphate etherase, found in Synechococcus sp. (strain CC9902).